The primary structure comprises 853 residues: DNA mismatch repair protein MutS (853 aa).

ATP is bound at residue G613–S620.

It belongs to the DNA mismatch repair MutS family.

This protein is involved in the repair of mismatches in DNA. It is possible that it carries out the mismatch recognition step. This protein has a weak ATPase activity. The chain is DNA mismatch repair protein MutS from Vibrio vulnificus (strain YJ016).